A 454-amino-acid chain; its full sequence is Isthmin-1 (454 aa).

An N-terminal signal peptide occupies residues 1-29 (MVRLAAELLLLLGLLLLTLHITVLRGSGA). Disordered stretches follow at residues 29 to 93 (ASDR…PRSF), 125 to 144 (PDSE…WSLP), and 161 to 209 (TNSG…STDG). Positions 38–55 (GNNNLNLESDSTSETSFP) are enriched in polar residues. Positions 128–137 (EAEKDQHPEN) are enriched in basic and acidic residues. One can recognise a TSP type-1 domain in the interval 208-252 (DGEGDWSLWSVCSVTCGNGNQKRTRSCGYACIATESRTCDRPNCP). Disulfide bonds link Cys-219–Cys-246, Cys-223–Cys-251, and Cys-234–Cys-238. Residues 279-442 (LFEVDMDSCE…QKCTESPSDE (164 aa)) enclose the AMOP domain.

Belongs to the isthmin family. In terms of assembly, interacts with integrin ITGAV/ITGB5.

It is found in the secreted. In terms of biological role, acts as an angiogenesis inhibitor. The sequence is that of Isthmin-1 (Ism1) from Mus musculus (Mouse).